Reading from the N-terminus, the 189-residue chain is GMP synthase [glutamine-hydrolyzing] subunit A (189 aa).

Positions 5-189 (KIIVINNYGQ…MNFFKVCEDY (185 aa)) constitute a Glutamine amidotransferase type-1 domain. Residue Cys-79 is the Nucleophile of the active site. Residues His-166 and Glu-168 contribute to the active site.

In terms of assembly, heterodimer composed of a glutamine amidotransferase subunit (A) and a GMP-binding subunit (B).

The catalysed reaction is XMP + L-glutamine + ATP + H2O = GMP + L-glutamate + AMP + diphosphate + 2 H(+). It functions in the pathway purine metabolism; GMP biosynthesis; GMP from XMP (L-Gln route): step 1/1. In terms of biological role, catalyzes the synthesis of GMP from XMP. This Methanococcoides burtonii (strain DSM 6242 / NBRC 107633 / OCM 468 / ACE-M) protein is GMP synthase [glutamine-hydrolyzing] subunit A.